The chain runs to 83 residues: Exodeoxyribonuclease 7 small subunit (83 aa).

Belongs to the XseB family. As to quaternary structure, heterooligomer composed of large and small subunits.

It is found in the cytoplasm. It catalyses the reaction Exonucleolytic cleavage in either 5'- to 3'- or 3'- to 5'-direction to yield nucleoside 5'-phosphates.. Functionally, bidirectionally degrades single-stranded DNA into large acid-insoluble oligonucleotides, which are then degraded further into small acid-soluble oligonucleotides. The chain is Exodeoxyribonuclease 7 small subunit from Bradyrhizobium sp. (strain BTAi1 / ATCC BAA-1182).